The chain runs to 134 residues: Protein dpy-30 homolog (134 aa).

Residues Met-1 to Tyr-81 form a disordered region. Residues Ala-31–Lys-68 are compositionally biased toward low complexity. A compositionally biased stretch (polar residues) spans Ser-71–Tyr-81.

The protein belongs to the dpy-30 family. Core component of several methyltransferase-containing complexes. Component of the SET1 complex, composed at least of the catalytic subunit Set1, wds/WDR5, Wdr82, Rbbp5, ash2, Cfp1/CXXC1, hcf and Dpy-30L1. Component of the MLL3/4 complex composed at least of the catalytic subunit trr, ash2, Rbbp5, Dpy-30L1, wds, hcf, ptip, Pa1, Utx, Lpt and Ncoa6. As to expression, expressed in larval brain, gonad, imaginal disk and salivary gland and in adult brain, testis, ovary and salivary gland.

The protein resides in the nucleus. Functionally, component of the SET1 complex that specifically di- and trimethylates 'Lys-4' of histone H3 and of the MLL3/4 complex which also methylates histone H3 'Lys-4'. Inhibits MTF-1 transcription factor activity. In Drosophila melanogaster (Fruit fly), this protein is Protein dpy-30 homolog.